Reading from the N-terminus, the 83-residue chain is Exodeoxyribonuclease 7 small subunit (83 aa).

It belongs to the XseB family. As to quaternary structure, heterooligomer composed of large and small subunits.

The protein resides in the cytoplasm. The enzyme catalyses Exonucleolytic cleavage in either 5'- to 3'- or 3'- to 5'-direction to yield nucleoside 5'-phosphates.. Bidirectionally degrades single-stranded DNA into large acid-insoluble oligonucleotides, which are then degraded further into small acid-soluble oligonucleotides. This chain is Exodeoxyribonuclease 7 small subunit, found in Rhizobium etli (strain ATCC 51251 / DSM 11541 / JCM 21823 / NBRC 15573 / CFN 42).